Here is a 95-residue protein sequence, read N- to C-terminus: Large ribosomal subunit protein uL23 (95 aa).

The protein belongs to the universal ribosomal protein uL23 family. Part of the 50S ribosomal subunit. Contacts protein L29, and trigger factor when it is bound to the ribosome.

One of the early assembly proteins it binds 23S rRNA. One of the proteins that surrounds the polypeptide exit tunnel on the outside of the ribosome. Forms the main docking site for trigger factor binding to the ribosome. This chain is Large ribosomal subunit protein uL23, found in Coxiella burnetii (strain CbuK_Q154) (Coxiella burnetii (strain Q154)).